The primary structure comprises 30 residues: Methanobactin mb-OB3b (30 aa).

Residues 1–19 (MTVKIAQKKVLPVIGRAAA) constitute a propeptide that is removed on maturation. The segment at residues 20 to 21 (LC) is a cross-link (2-(3-methylbutanoyl)-5-hydroxyoxazole-4-carbothionic acid (Leu-Cys)). Residues Cys-21 and Cys-27 each coordinate Cu(2+). Cys-24 and Cys-29 are joined by a disulfide. The proline 5-hydroxy-oxazole-4-carbothionic acid (Pro-Cys) cross-link spans 26–27 (PC).

In terms of assembly, monomer. In the absence of copper, may exist as a dimer or an oligomer.

It localises to the secreted. The protein resides in the cytoplasm. The catalysed reaction is 2 superoxide + 2 H(+) = H2O2 + O2. Chalkophore involved in scavenging, uptake and suppression of toxicity of copper. Each apo-methanobactin (apo-mb) complexes 1 Cu(2+) or Cu(1+) ion to form Cu(1+)-mb (Cu-mb) which is then taken up by the cell. Enhances growth rate in the presence of copper and reduces growth lag upon exposition to elevated levels of copper. Cu-mb contributes to the switchover from soluble methane monooxygenase (sMMO) to the membrane-bound particulate MMO (pMMO) by inducing transcription of pMMO subunit A. It also stimulates the enzymatic activity of pMMO. In the absence of copper, binds other metal ions, like Zn(2+), Ag(1+), Au(3+), Co(2+), Cd(2+), Fe(3+), Hg(2+), Mn(2+), Ni(2+), Pb(2+) or U(6+), but not Ba(2+), Ca(2+), La(2+), Mg(2+) or Sr(2+). Uptake is an active process, which may involve TonB-dependent transporters, and as such does not involve porins. Cu-Mb can be taken up by other methanotrophic bacteria but not by E.coli. Has Cu-dependent superoxide dismutase-like activity. Shows reductant-dependent oxidase and hydrogen peroxide reductase activities. Reduces copper-levels in liver in a rat model of Wilson disease. The sequence is that of Methanobactin mb-OB3b from Methylosinus trichosporium.